Here is a 108-residue protein sequence, read N- to C-terminus: MPKPGILKSKSMFCVIYRSSKRDQTYLYVEKKDDFSRVPEELMKGFGQPQLAMILPLDGRKKLVNADIEKVKQALTEQGYYLQLPPPPEDLLKQHLSVMGQKTDDTNK.

In terms of domain architecture, YcgL spans 12 to 96 (MFCVIYRSSK…PPEDLLKQHL (85 aa)).

The chain is Protein YcgL from Escherichia coli (strain K12 / MC4100 / BW2952).